A 1227-amino-acid chain; its full sequence is MPPLIESVVLQPLIAPIDPGADGRRSRRIERRSFARIKDAIDLPLLIETQLKSFEWFKREGLRELFDEISPITDFTGKNLELHFRDYTFGEPRYDEFECRERDLTYAAPLRVRVELRILTTGEIKESEIFLGDFPIMTDNGTFVYNGAERVVVSQLIRSPGVYFKDEKEPTSGRSLHTAKLIPNRGAWLEFETNKRDVISVKVDRKRKIPVTILLRAITAWIAEENGNGRWVPDNELDKFGHNDQIIELFRHVDTVPEHPYIHATLDKDPSRNAKEALLELYKRLRPGDPPTLENARSLIESLLFSPRRYDLAKVGRYKLNKNLWERDVRRDGAKAPDLSVRVLLPRDIFRIVEQLILLNNGHGRPDDIDHLGNRRVRTVGELIQQQFRVGLLRLERVVKERMSLQDPASATPNGLINIRPVVAAMREFFGGSQLSQFMDQTNPLAELTNKRRLSALGPGGLSRDRAGFEVRDVHHSHYGRICPVETPEGPNIGLIGTMSTFARVNEMGFLETPYRKVYNSVDNVQVWKEKGILLRDVRDLRTGDLIAAKGTRVNDEIARQITIGLLRGQILREDIVDPDTDELIAEAGTEINRALAERIVELPIKHIKIRPVVSQEVDYLSADEEDRFVIVQANAPLDQHNRFLDTIVSCRFGEDFVSERVERVDYMDVSPKQVVSVSTSLIPFLEHDDANRALMGSNMQRQAVPLLRPDAPIVGTGMEYRAARDSGQVIVARRDGVVVSTTSERIVIEEDDGNQTEYRLRKFMRSNQDTCINQRPAVVRGQRVKAGDVIADSSSTDQGELALGQNVLVAYMPWEGGNFEDAILVSERLVREDIFTSIHIEKYEVEARDTKLGPEEITRDIPNVGQESLRNLDERGIIYIGAEVQPNDILVGKITPKGETDLTAEERLLRAIFGEKAREVKDSSLRVPNGVRGKVIDVKVFSRSEGAELPVGVNQTVRVLLCQKRKISAGDKMAGRHGNKGVVSRVLPIEDMPFLPDGRPVDIILNPIGVPSRMNIGQILETHLGWAAARLGFRVATPVFDGAHEDQIKDLLVQAGLPADGKVTLYDGRTGERFDNPVTVGYAYMLKLAHLVEDKIHARSTGPYSLVTQQPLGGKAQFGGQRFGEMEVWALEAYGAAYTLQEMLTVKSDDVVGRVKTYEAIVKGEPIQEAGVPESFKVLIKELQSLGLSVEVLSADEKPVELSDDLDSDIGALEGINLSGMERGEF.

This sequence belongs to the RNA polymerase beta chain family. The RNAP catalytic core consists of 2 alpha, 1 beta, 1 beta' and 1 omega subunit. When a sigma factor is associated with the core the holoenzyme is formed, which can initiate transcription.

The enzyme catalyses RNA(n) + a ribonucleoside 5'-triphosphate = RNA(n+1) + diphosphate. DNA-dependent RNA polymerase catalyzes the transcription of DNA into RNA using the four ribonucleoside triphosphates as substrates. This chain is DNA-directed RNA polymerase subunit beta, found in Chloroflexus aurantiacus (strain ATCC 29366 / DSM 635 / J-10-fl).